The sequence spans 30 residues: Acidic phospholipase A2 homolog cannitoxin gamma chain (30 aa).

Heterotrimer of alpha, beta, and gamma chains; non-covalently linked. Glycosylated. In terms of tissue distribution, expressed by the venom gland.

It localises to the secreted. Functionally, heterotrimer: Snake venom phospholipase A2 (PLA2) heterotrimer that acts as a potent presynaptic neurotoxin by blocking synaptic transmission and synaptic vesicle recycling. Enzymatic activity is essential for the neurotoxic effects. May act by binding in a calcium-dependent fashion to neurotonal pentraxin-1 (NPTX1) and neurotonal pentraxin-2 (NPTX2), but not to neuronal pentraxin receptor (NPTXR). Also binds to taipoxin-associated calcium binding protein 49 (RCN2), a protein localized in the lumen of endoplasmic reticulum. Monomer (gamma chain): Snake venom phospholipase A2 homolog that is neither toxic nor enzymatically active. Does not bind calcium. This is Acidic phospholipase A2 homolog cannitoxin gamma chain from Oxyuranus scutellatus canni (Papuan taipan).